The following is a 112-amino-acid chain: Nitrogen regulatory protein P-II (112 aa).

An O-UMP-tyrosine modification is found at tyrosine 51.

It belongs to the P(II) protein family. As to quaternary structure, homotrimer.

The protein resides in the plastid. The protein localises to the chloroplast. Its function is as follows. P-II indirectly controls the transcription of the glutamine synthetase gene (glnA). P-II prevents NR-II-catalyzed conversion of NR-I to NR-I-phosphate, the transcriptional activator of glnA. When P-II is uridylylated to P-II-UMP, these events are reversed. When the ratio of Gln to 2-ketoglutarate decreases, P-II is uridylylated to P-II-UMP, which causes the deadenylation of glutamine synthetase, so activating the enzyme. In Pyropia yezoensis (Susabi-nori), this protein is Nitrogen regulatory protein P-II (glnB).